A 561-amino-acid chain; its full sequence is DNA ligase B (561 aa).

The active-site N6-AMP-lysine intermediate is Lys128.

It belongs to the NAD-dependent DNA ligase family. LigB subfamily.

The enzyme catalyses NAD(+) + (deoxyribonucleotide)n-3'-hydroxyl + 5'-phospho-(deoxyribonucleotide)m = (deoxyribonucleotide)n+m + AMP + beta-nicotinamide D-nucleotide.. Functionally, catalyzes the formation of phosphodiester linkages between 5'-phosphoryl and 3'-hydroxyl groups in double-stranded DNA using NAD as a coenzyme and as the energy source for the reaction. The polypeptide is DNA ligase B (Pseudomonas syringae pv. tomato (strain ATCC BAA-871 / DC3000)).